We begin with the raw amino-acid sequence, 612 residues long: Polyadenylation factor subunit 2 (612 aa).

The segment at 1-21 (MAYEPRGDHGGGGGGQGQDGA) is disordered. 7 WD repeats span residues 93–132 (KIKHPINVVRWTPEGRRLLTASTSGEFTLWNGTGFNFETI), 135–175 (AHDS…QSIN), 177–215 (HTDPIRDLAFSPSDSKFVTASDDSTLKIFDFALGQMESK), 218–257 (GHGWDAKSVDWHPTKGLLVSGSKDHLVKLWDPRTSRCLTT), 260–300 (GHKS…DICL), 303–345 (GHEK…PGQS), and 373–412 (AHDYAIWSLDWHPLGHILASGSNDRITRFWSRARPGDAEV). 3 disordered regions span residues 424 to 450 (AEAQGTWDRRGGRRQRQEEEQQEMEDE), 486 to 514 (PPPPIPGVGAGGPPPPLPFPLPGLNGSLP), and 544 to 612 (PPPG…TRAR). The span at 430–442 (WDRRGGRRQRQEE) shows a compositional bias: basic and acidic residues. 2 stretches are compositionally biased toward pro residues: residues 486-506 (PPPPIPGVGAGGPPPPLPFPL) and 544-575 (PPPGALPPGLLPPGGIPPPPGGFGMPIPPPPM).

It is found in the nucleus. Its function is as follows. Required for 3'-end cleavage and polyadenylation of pre-mRNAs. Also involved in chromosome segregation where it has a role in chromosome attachment to the mitotic spindle. The chain is Polyadenylation factor subunit 2 (PFS2) from Gibberella zeae (strain ATCC MYA-4620 / CBS 123657 / FGSC 9075 / NRRL 31084 / PH-1) (Wheat head blight fungus).